Reading from the N-terminus, the 325-residue chain is Glutarate 2-hydroxylase (325 aa).

Positions 160, 162, and 292 each coordinate Fe cation.

Belongs to the glutarate hydroxylase family. As to quaternary structure, homotetramer. Fe(2+) is required as a cofactor.

The enzyme catalyses glutarate + 2-oxoglutarate + O2 = (S)-2-hydroxyglutarate + succinate + CO2. It participates in amino-acid degradation. In terms of biological role, acts as an alpha-ketoglutarate-dependent dioxygenase catalyzing hydroxylation of glutarate (GA) to L-2-hydroxyglutarate (L2HG). Functions in a L-lysine degradation pathway that proceeds via cadaverine, glutarate and L-2-hydroxyglutarate. This chain is Glutarate 2-hydroxylase, found in Escherichia coli (strain 55989 / EAEC).